The chain runs to 764 residues: 5-methyltetrahydropteroyltriglutamate--homocysteine methyltransferase (764 aa).

Residues Arg-16–Lys-19 and Lys-115 contribute to the 5-methyltetrahydropteroyltri-L-glutamate site. Residues Ile-435–Ser-437 and Glu-488 each bind L-homocysteine. L-methionine contacts are provided by residues Ile-435 to Ser-437 and Glu-488. 5-methyltetrahydropteroyltri-L-glutamate contacts are provided by residues Arg-519–Cys-520 and Trp-565. Asp-603 contacts L-homocysteine. Asp-603 contributes to the L-methionine binding site. Glu-609 contacts 5-methyltetrahydropteroyltri-L-glutamate. Residues His-645, Cys-647, and Glu-669 each coordinate Zn(2+). His-698 acts as the Proton donor in catalysis. Residue Cys-730 coordinates Zn(2+).

It belongs to the vitamin-B12 independent methionine synthase family. Requires Zn(2+) as cofactor.

It carries out the reaction 5-methyltetrahydropteroyltri-L-glutamate + L-homocysteine = tetrahydropteroyltri-L-glutamate + L-methionine. It participates in amino-acid biosynthesis; L-methionine biosynthesis via de novo pathway; L-methionine from L-homocysteine (MetE route): step 1/1. Its function is as follows. Catalyzes the transfer of a methyl group from 5-methyltetrahydrofolate to homocysteine resulting in methionine formation. This chain is 5-methyltetrahydropteroyltriglutamate--homocysteine methyltransferase, found in Burkholderia pseudomallei (strain K96243).